Reading from the N-terminus, the 287-residue chain is uncharacterized protein (287 aa).

The next 7 helical transmembrane spans lie at 27–47 (LTFS…FGVQ), 66–86 (LGTI…VTAF), 97–117 (WFWG…GVLL), 135–155 (IVFA…LSAL), 171–191 (IFIW…VLNF), 205–225 (LFPG…VYFV), and 254–274 (SALF…YFIL).

It localises to the cell membrane. This is an uncharacterized protein from Mycoplasma pneumoniae (strain ATCC 29342 / M129 / Subtype 1) (Mycoplasmoides pneumoniae).